A 232-amino-acid chain; its full sequence is Lipopolysaccharide core heptose(II) kinase WaaY (232 aa).

Belongs to the protein kinase superfamily. RfaY/WaaY family.

It catalyses the reaction alpha-D-Glc-(1-&gt;3)-[L-alpha-D-Hep-(1-&gt;7)]-L-alpha-D-Hep-(1-&gt;3)-4-O-PO3(2-)-L-alpha-D-Hep-(1-&gt;5)-[alpha-Kdo-(2-&gt;4)]-alpha-Kdo-(2-&gt;6)-lipid A + ATP = alpha-D-Glc-(1-&gt;3)-[L-alpha-D-Hep-(1-&gt;7)]-4-O-PO3(2-)-L-alpha-D-Hep-(1-&gt;3)-4-O-PO3(2-)-L-alpha-D-Hep-(1-&gt;5)-[alpha-Kdo-(2-&gt;4)]-alpha-Kdo-(2-&gt;6)-lipid A + ADP + H(+). It participates in bacterial outer membrane biogenesis; LPS core biosynthesis. Its function is as follows. Kinase involved in the biosynthesis of the core oligosaccharide region of lipopolysaccharide (LPS). Catalyzes the phosphorylation of the second heptose unit (HepII) of the inner core. In Escherichia coli (strain K12), this protein is Lipopolysaccharide core heptose(II) kinase WaaY.